The sequence spans 502 residues: ATP synthase subunit alpha (502 aa).

ATP is bound at residue 169 to 176 (GDRQTGKT).

This sequence belongs to the ATPase alpha/beta chains family. As to quaternary structure, F-type ATPases have 2 components, CF(1) - the catalytic core - and CF(0) - the membrane proton channel. CF(1) has five subunits: alpha(3), beta(3), gamma(1), delta(1), epsilon(1). CF(0) has three main subunits: a(1), b(2) and c(9-12). The alpha and beta chains form an alternating ring which encloses part of the gamma chain. CF(1) is attached to CF(0) by a central stalk formed by the gamma and epsilon chains, while a peripheral stalk is formed by the delta and b chains.

The protein resides in the cell inner membrane. It carries out the reaction ATP + H2O + 4 H(+)(in) = ADP + phosphate + 5 H(+)(out). Produces ATP from ADP in the presence of a proton gradient across the membrane. The alpha chain is a regulatory subunit. This Thermodesulfovibrio yellowstonii (strain ATCC 51303 / DSM 11347 / YP87) protein is ATP synthase subunit alpha.